Here is a 186-residue protein sequence, read N- to C-terminus: Glutathione S-transferase 1, isoform A (186 aa).

The GST N-terminal domain occupies 1 to 81 (MDFYYLPGSA…YLVEKYCAHD (81 aa)). Glutathione is bound by residues S9, 50-52 (HCI), and 65-67 (ESR). The 95-residue stretch at 92-186 (DPRRRAVVHQ…RRCRVRSAAI (95 aa)) folds into the GST C-terminal domain.

It belongs to the GST superfamily. Theta family. In terms of assembly, homodimer.

The catalysed reaction is RX + glutathione = an S-substituted glutathione + a halide anion + H(+). In terms of biological role, conjugation of reduced glutathione to a wide number of exogenous and endogenous hydrophobic electrophiles. This is Glutathione S-transferase 1, isoform A from Anopheles gambiae (African malaria mosquito).